A 486-amino-acid chain; its full sequence is Stretch-activated cation channel yam8 (486 aa).

The first 24 residues, methionine 1–glycine 24, serve as a signal peptide directing secretion. At alanine 25–serine 464 the chain is on the extracellular side. Residues asparagine 33, asparagine 49, asparagine 59, asparagine 82, and asparagine 93 are each glycosylated (N-linked (GlcNAc...) asparagine). Residues alanine 465–valine 485 form a helical membrane-spanning segment. A topological domain (cytoplasmic) is located at residue glutamate 486.

It is found in the cell membrane. Functionally, calcium-permeable, cation-selective stretch-activated channel (SAC) that functions together with CCH1 to mediate calcium entry into cells. Required during mating. The sequence is that of Stretch-activated cation channel yam8 from Schizosaccharomyces pombe (strain 972 / ATCC 24843) (Fission yeast).